Here is a 365-residue protein sequence, read N- to C-terminus: Zinc transporter 7 (365 aa).

The N-terminal stretch at 1 to 26 is a signal peptide; the sequence is MAYSKACYKLTTITILLLSFTLPSLA. At 27 to 56 the chain is on the extracellular side; sequence GNAENADVSECKAESGDLSCHNNKEAQKLK. The helical transmembrane segment at 57–77 threads the bilayer; the sequence is IIAIPSILVASMIGVSLPLFS. Topologically, residues 78-90 are cytoplasmic; sequence RSIPALGPDREMS. The chain crosses the membrane as a helical span at residues 91-111; that stretch reads VIVKTLASGVILATGFMHVLP. Residues 112–129 lie on the Extracellular side of the membrane; the sequence is DSFDDLTSKCLPEDPWQK. Residues 130-150 traverse the membrane as a helical segment; it reads FPFATFITMISALLVLMIESF. Residues 151–210 are Cytoplasmic-facing; that stretch reads AMCAYARRTSKREGEVVPLENGSNSVDTQNDIQTLENGSSYVEKQEKVNEDKTSELLRNK. Residues 211 to 231 form a helical membrane-spanning segment; that stretch reads VIAQILELGIVVHSVVIGLAM. Residues 232-242 lie on the Extracellular side of the membrane; the sequence is GASDNKCTVQS. Residues 243-263 traverse the membrane as a helical segment; sequence LIAALCFHQLFEGMGLGGSIL. The Cytoplasmic segment spans residues 264-272; that stretch reads QAQFKSKTN. A helical transmembrane segment spans residues 273–293; it reads WTMVFFFSVTTPFGIVLGMAI. The Extracellular portion of the chain corresponds to 294–304; the sequence is QKIYDETSPTA. The chain crosses the membrane as a helical span at residues 305–325; the sequence is LIVVGVLNACSAGLLIYMALV. The Cytoplasmic segment spans residues 326–344; the sequence is NLLAHEFFGPKIQGNIKLH. The helical transmembrane segment at 345-365 threads the bilayer; the sequence is VLGYVATFTGAAGMSLMAKWA.

Belongs to the ZIP transporter (TC 2.A.5) family.

It localises to the cell membrane. Its function is as follows. Probably mediates zinc uptake from the rhizosphere. The polypeptide is Zinc transporter 7 (ZIP7) (Arabidopsis thaliana (Mouse-ear cress)).